We begin with the raw amino-acid sequence, 224 residues long: Cytidylate kinase (224 aa).

12–20 (GPSGAGKGT) is an ATP binding site.

The protein belongs to the cytidylate kinase family. Type 1 subfamily.

Its subcellular location is the cytoplasm. The catalysed reaction is CMP + ATP = CDP + ADP. The enzyme catalyses dCMP + ATP = dCDP + ADP. This Aliivibrio salmonicida (strain LFI1238) (Vibrio salmonicida (strain LFI1238)) protein is Cytidylate kinase.